Reading from the N-terminus, the 64-residue chain is Large ribosomal subunit protein bL33 (64 aa).

It belongs to the bacterial ribosomal protein bL33 family.

The polypeptide is Large ribosomal subunit protein bL33 (Picosynechococcus sp. (strain ATCC 27264 / PCC 7002 / PR-6) (Agmenellum quadruplicatum)).